Reading from the N-terminus, the 494-residue chain is Protein translocase subunit SecD (494 aa).

6 helical membrane passes run 7-27, 322-342, 345-365, 372-392, 420-440, and 441-461; these read WFAL…NLPF, LIAA…FYRL, FIAI…YALI, PGVA…VLIF, IIDG…LGTG, and FVKG…FTAL.

This sequence belongs to the SecD/SecF family. SecD subfamily. In terms of assembly, forms a complex with SecF. Part of the essential Sec protein translocation apparatus which comprises SecA, SecYEG and auxiliary proteins SecDF. Other proteins may also be involved.

It is found in the cell inner membrane. Part of the Sec protein translocase complex. Interacts with the SecYEG preprotein conducting channel. SecDF uses the proton motive force (PMF) to complete protein translocation after the ATP-dependent function of SecA. Its function is as follows. Probably participates in protein translocation into and across both the cytoplasmic and thylakoid membranes in cyanobacterial cells. In Prochlorococcus marinus (strain SARG / CCMP1375 / SS120), this protein is Protein translocase subunit SecD.